A 126-amino-acid polypeptide reads, in one-letter code: C-type natriuretic peptide 2 (126 aa).

The first 22 residues, 1 to 22 (MAVCSSSSLILLTVFLSVAVET), serve as a signal peptide directing secretion. Positions 23–102 (RPSSDRDEEQ…REKTRRWGRK (80 aa)) are excised as a propeptide. Residues 44 to 80 (SLILAPPTSNDSTEGSSGSPEPPTPSEAPVLIHGDRG) form a disordered region. A disulfide bridge connects residues cysteine 110 and cysteine 126.

It belongs to the natriuretic peptide family. As to expression, brain and spinal cord.

It is found in the secreted. Exhibits natriuretic and vasodepressant activity. Has cGMP-stimulating activity. May help to regulate body fluid homeostasis in a variety of aquatic environments. The sequence is that of C-type natriuretic peptide 2 from Oryzias latipes (Japanese rice fish).